The following is a 109-amino-acid chain: Large ribosomal subunit protein uL24 (109 aa).

This sequence belongs to the universal ribosomal protein uL24 family. In terms of assembly, part of the 50S ribosomal subunit.

Functionally, one of two assembly initiator proteins, it binds directly to the 5'-end of the 23S rRNA, where it nucleates assembly of the 50S subunit. One of the proteins that surrounds the polypeptide exit tunnel on the outside of the subunit. The sequence is that of Large ribosomal subunit protein uL24 from Rickettsia akari (strain Hartford).